The chain runs to 122 residues: Large ribosomal subunit protein bL12 (122 aa).

The protein belongs to the bacterial ribosomal protein bL12 family. As to quaternary structure, homodimer. Part of the ribosomal stalk of the 50S ribosomal subunit. Forms a multimeric L10(L12)X complex, where L10 forms an elongated spine to which 2 to 4 L12 dimers bind in a sequential fashion. Binds GTP-bound translation factors.

Functionally, forms part of the ribosomal stalk which helps the ribosome interact with GTP-bound translation factors. Is thus essential for accurate translation. In Xylella fastidiosa (strain M12), this protein is Large ribosomal subunit protein bL12.